The sequence spans 426 residues: Glutamate-1-semialdehyde 2,1-aminomutase (426 aa).

The residue at position 265 (Lys265) is an N6-(pyridoxal phosphate)lysine.

Belongs to the class-III pyridoxal-phosphate-dependent aminotransferase family. HemL subfamily. As to quaternary structure, homodimer. Requires pyridoxal 5'-phosphate as cofactor.

The protein localises to the cytoplasm. The catalysed reaction is (S)-4-amino-5-oxopentanoate = 5-aminolevulinate. The protein operates within porphyrin-containing compound metabolism; protoporphyrin-IX biosynthesis; 5-aminolevulinate from L-glutamyl-tRNA(Glu): step 2/2. The protein is Glutamate-1-semialdehyde 2,1-aminomutase of Pectobacterium carotovorum subsp. carotovorum (strain PC1).